A 398-amino-acid polypeptide reads, in one-letter code: Acetate kinase (398 aa).

Residue N8 participates in Mg(2+) binding. K15 is an ATP binding site. R89 serves as a coordination point for substrate. D146 (proton donor/acceptor) is an active-site residue. Residues 206–210 (HIGNG), 283–285 (DMR), and 331–335 (GMGEN) each bind ATP. Position 383 (E383) interacts with Mg(2+).

It belongs to the acetokinase family. In terms of assembly, homodimer. Mg(2+) serves as cofactor. The cofactor is Mn(2+).

The protein localises to the cytoplasm. It carries out the reaction acetate + ATP = acetyl phosphate + ADP. Its pathway is metabolic intermediate biosynthesis; acetyl-CoA biosynthesis; acetyl-CoA from acetate: step 1/2. Functionally, catalyzes the formation of acetyl phosphate from acetate and ATP. Can also catalyze the reverse reaction. This is Acetate kinase from Streptococcus pyogenes serotype M1.